Consider the following 156-residue polypeptide: ATP synthase subunit b (156 aa).

Residues 7–27 form a helical membrane-spanning segment; sequence LFAQIIVFFGLVWFTMKFVWP.

It belongs to the ATPase B chain family. As to quaternary structure, F-type ATPases have 2 components, F(1) - the catalytic core - and F(0) - the membrane proton channel. F(1) has five subunits: alpha(3), beta(3), gamma(1), delta(1), epsilon(1). F(0) has three main subunits: a(1), b(2) and c(10-14). The alpha and beta chains form an alternating ring which encloses part of the gamma chain. F(1) is attached to F(0) by a central stalk formed by the gamma and epsilon chains, while a peripheral stalk is formed by the delta and b chains.

It is found in the cell inner membrane. Its function is as follows. F(1)F(0) ATP synthase produces ATP from ADP in the presence of a proton or sodium gradient. F-type ATPases consist of two structural domains, F(1) containing the extramembraneous catalytic core and F(0) containing the membrane proton channel, linked together by a central stalk and a peripheral stalk. During catalysis, ATP synthesis in the catalytic domain of F(1) is coupled via a rotary mechanism of the central stalk subunits to proton translocation. Component of the F(0) channel, it forms part of the peripheral stalk, linking F(1) to F(0). This Neisseria gonorrhoeae (strain NCCP11945) protein is ATP synthase subunit b.